Reading from the N-terminus, the 438-residue chain is Serine hydroxymethyltransferase 1 (438 aa).

(6S)-5,6,7,8-tetrahydrofolate contacts are provided by residues L130 and 134 to 136; that span reads GHL. The residue at position 239 (K239) is an N6-(pyridoxal phosphate)lysine.

The protein belongs to the SHMT family. Homodimer. Requires pyridoxal 5'-phosphate as cofactor.

The protein resides in the cytoplasm. The catalysed reaction is (6R)-5,10-methylene-5,6,7,8-tetrahydrofolate + glycine + H2O = (6S)-5,6,7,8-tetrahydrofolate + L-serine. It participates in one-carbon metabolism; tetrahydrofolate interconversion. The protein operates within amino-acid biosynthesis; glycine biosynthesis; glycine from L-serine: step 1/1. In terms of biological role, catalyzes the reversible interconversion of serine and glycine with tetrahydrofolate (THF) serving as the one-carbon carrier. This reaction serves as the major source of one-carbon groups required for the biosynthesis of purines, thymidylate, methionine, and other important biomolecules. Also exhibits THF-independent aldolase activity toward beta-hydroxyamino acids, producing glycine and aldehydes, via a retro-aldol mechanism. Thus, is able to catalyze the cleavage of L-allo-threonine. The sequence is that of Serine hydroxymethyltransferase 1 from Mycobacterium tuberculosis (strain ATCC 25618 / H37Rv).